The sequence spans 119 residues: Phosphoribosyl-AMP cyclohydrolase (119 aa).

Asp77 is a binding site for Mg(2+). Residue Cys78 participates in Zn(2+) binding. Positions 79 and 81 each coordinate Mg(2+). Residues Cys94 and Cys101 each coordinate Zn(2+).

Belongs to the PRA-CH family. Homodimer. It depends on Mg(2+) as a cofactor. Requires Zn(2+) as cofactor.

The protein resides in the cytoplasm. The enzyme catalyses 1-(5-phospho-beta-D-ribosyl)-5'-AMP + H2O = 1-(5-phospho-beta-D-ribosyl)-5-[(5-phospho-beta-D-ribosylamino)methylideneamino]imidazole-4-carboxamide. It functions in the pathway amino-acid biosynthesis; L-histidine biosynthesis; L-histidine from 5-phospho-alpha-D-ribose 1-diphosphate: step 3/9. In terms of biological role, catalyzes the hydrolysis of the adenine ring of phosphoribosyl-AMP. In Dinoroseobacter shibae (strain DSM 16493 / NCIMB 14021 / DFL 12), this protein is Phosphoribosyl-AMP cyclohydrolase.